A 277-amino-acid polypeptide reads, in one-letter code: Polyamine aminopropyltransferase (277 aa).

Positions 2-235 (ELWFTENQDE…SLWTFTMGSK (234 aa)) constitute a PABS domain. Gln-31 serves as a coordination point for S-methyl-5'-thioadenosine. Spermidine is bound by residues His-62 and Asp-86. Residues Glu-106 and 137–138 (DG) each bind S-methyl-5'-thioadenosine. Catalysis depends on Asp-155, which acts as the Proton acceptor. 155–158 (DSTD) serves as a coordination point for spermidine. Pro-162 is a binding site for S-methyl-5'-thioadenosine.

The protein belongs to the spermidine/spermine synthase family. As to quaternary structure, homodimer or homotetramer.

The protein resides in the cytoplasm. It carries out the reaction S-adenosyl 3-(methylsulfanyl)propylamine + putrescine = S-methyl-5'-thioadenosine + spermidine + H(+). Its pathway is amine and polyamine biosynthesis; spermidine biosynthesis; spermidine from putrescine: step 1/1. In terms of biological role, catalyzes the irreversible transfer of a propylamine group from the amino donor S-adenosylmethioninamine (decarboxy-AdoMet) to putrescine (1,4-diaminobutane) to yield spermidine. The chain is Polyamine aminopropyltransferase from Thermoanaerobacter pseudethanolicus (strain ATCC 33223 / 39E) (Clostridium thermohydrosulfuricum).